The primary structure comprises 176 residues: MGTLGARRGLEWFLGFYFLSHIPITLLMDLQGVLPRDLYPVELRNLQQWYIEEFKDPLLQTPPAWFKSFLFCELVFQLPFFPIAAYAFFKGGCKWIRTPAIIYSVHTMTTLIPILSTLLLDDFSKASHFRGQGPKTFQERLFLISVYIPYFLIPLILLLFMVRNPYYKSEEKRKKK.

Residues 1 to 9 (MGTLGARRG) are Cytoplasmic-facing. The chain crosses the membrane as a helical span at residues 10–30 (LEWFLGFYFLSHIPITLLMDL). Residues 10–158 (LEWFLGFYFL…PYFLIPLILL (149 aa)) form the EXPERA domain. Over 31–68 (QGVLPRDLYPVELRNLQQWYIEEFKDPLLQTPPAWFKS) the chain is Lumenal. A helical membrane pass occupies residues 69 to 89 (FLFCELVFQLPFFPIAAYAFF). Residues valine 75 and glutamine 77 each coordinate cholesterol. At 90–99 (KGGCKWIRTP) the chain is on the cytoplasmic side. A helical membrane pass occupies residues 100–120 (AIIYSVHTMTTLIPILSTLLL). Residues 121-141 (DDFSKASHFRGQGPKTFQERL) are Lumenal-facing. Residues 142 to 162 (FLISVYIPYFLIPLILLLFMV) form a helical membrane-spanning segment. At 163 to 176 (RNPYYKSEEKRKKK) the chain is on the cytoplasmic side. The short motif at 172–176 (KRKKK) is the ER retention motif element.

It belongs to the TMEM97/sigma-2 receptor family. As to quaternary structure, homodimer. Interacts with NPC1; the interaction impairs NPC1-mediated cholesterol transport. Interacts with PGRMC1 and LDLR; the interaction increases LDL internalization. Interacts with histatin 1/HTN1; the interaction induces HTN1-stimulating wound healing. Interacts with TSPO.

The protein resides in the rough endoplasmic reticulum membrane. It localises to the nucleus membrane. In terms of biological role, sigma-2 receptor which contributes to ameliorate dysfunctional cellular processes and slow degenerative progression by regulating cell functions including cholesterol biosynthesis/trafficking, membrane trafficking, autophagy, lipid membrane-bound protein trafficking, and receptor stabilization at the cell surface. Forms a ternary complex with PGRMC1 receptor and low density lipoprotein receptor/LDLR at the plasma membrane, which increases LDLR-mediated LDL cholesterol internalization. Decreases lysosomal sterol transporter NPC1 availability to the cell, probably through NPC1-binding, hence controlling lipid transport, including cholesterol and LBPA, outside of late endosome/lysosome. Binds regio- and stereoselective ligand 20(S)-hydroxycholesterol (20(S)-OHC) which enhances TMEM97-NPC1 interaction and decreases TMEM97-PGRMC1 and TMEM97-TSPO interactions, thereby linking OHC binding to cholesterol homeostasis. Also able to bind cholesterol. Binds histatin 1 (Hst 1)/HN1 salivary peptide at the ER membrane, which is critical for increasing mitochondria-ER contacts and stimulating Hst1 wound healing properties. May alter the activity of some cytochrome P450 proteins. Although shows homologies with sterol isomerases (EXPERA domain), not able to catalyze sterol isomerization. However, may act as sensors of these molecules. Acts as a quality control factor in the ER, promoting the proteolytic degradation of nonproductive and extramitochondrial precursor proteins in the ER membrane thus removing them from the ER surface. The polypeptide is Sigma intracellular receptor 2 (TMEM97) (Bos taurus (Bovine)).